We begin with the raw amino-acid sequence, 147 residues long: MTIKVHHLRPAPGAKTAKTRVGRGEGSKGKTAGRGTKGSKARKNISAAFEGGQMPIHMRLPKMKGFKNKFKVTFQVVNLERLAELFPNGGQVGPAELVDAGAVRKGQPVKVLGTGDLGGVALQVSAHAFSASAKEKITAAGGSTTEL.

The disordered stretch occupies residues 1-42; the sequence is MTIKVHHLRPAPGAKTAKTRVGRGEGSKGKTAGRGTKGSKAR.

Belongs to the universal ribosomal protein uL15 family. As to quaternary structure, part of the 50S ribosomal subunit.

In terms of biological role, binds to the 23S rRNA. The polypeptide is Large ribosomal subunit protein uL15 (Salinispora arenicola (strain CNS-205)).